Reading from the N-terminus, the 220-residue chain is Deoxyribose-phosphate aldolase (220 aa).

The active-site Proton donor/acceptor is Asp89. Catalysis depends on Lys151, which acts as the Schiff-base intermediate with acetaldehyde. The active-site Proton donor/acceptor is Lys180.

It belongs to the DeoC/FbaB aldolase family. DeoC type 1 subfamily.

The protein localises to the cytoplasm. It carries out the reaction 2-deoxy-D-ribose 5-phosphate = D-glyceraldehyde 3-phosphate + acetaldehyde. The protein operates within carbohydrate degradation; 2-deoxy-D-ribose 1-phosphate degradation; D-glyceraldehyde 3-phosphate and acetaldehyde from 2-deoxy-alpha-D-ribose 1-phosphate: step 2/2. Functionally, catalyzes a reversible aldol reaction between acetaldehyde and D-glyceraldehyde 3-phosphate to generate 2-deoxy-D-ribose 5-phosphate. The polypeptide is Deoxyribose-phosphate aldolase (Staphylococcus haemolyticus (strain JCSC1435)).